A 423-amino-acid polypeptide reads, in one-letter code: Histidine--tRNA ligase (423 aa).

This sequence belongs to the class-II aminoacyl-tRNA synthetase family. Homodimer.

It localises to the cytoplasm. It carries out the reaction tRNA(His) + L-histidine + ATP = L-histidyl-tRNA(His) + AMP + diphosphate + H(+). The sequence is that of Histidine--tRNA ligase from Corynebacterium diphtheriae (strain ATCC 700971 / NCTC 13129 / Biotype gravis).